Here is a 508-residue protein sequence, read N- to C-terminus: WD repeat-containing protein JIP5 (508 aa).

6 WD repeats span residues E62–K105, R106–K145, D149–T188, H193–P233, D253–Q294, and S345–S382. The disordered stretch occupies residues K376 to L508. Positions S380–E393 are enriched in acidic residues. A compositionally biased stretch (low complexity) spans E407–D419. A WD 7 repeat occupies C431–E472. Residues E441–N454 show a composition bias toward acidic residues. The segment covering H455–D466 has biased composition (basic and acidic residues). Residues K478–K492 show a composition bias toward basic residues.

The protein belongs to the WD repeat WDR55 family.

The protein resides in the nucleus. The protein localises to the nucleolus. The polypeptide is WD repeat-containing protein JIP5 (JIP5) (Candida glabrata (strain ATCC 2001 / BCRC 20586 / JCM 3761 / NBRC 0622 / NRRL Y-65 / CBS 138) (Yeast)).